Reading from the N-terminus, the 86-residue chain is Exodeoxyribonuclease 7 small subunit (86 aa).

This sequence belongs to the XseB family. In terms of assembly, heterooligomer composed of large and small subunits.

It localises to the cytoplasm. It catalyses the reaction Exonucleolytic cleavage in either 5'- to 3'- or 3'- to 5'-direction to yield nucleoside 5'-phosphates.. Bidirectionally degrades single-stranded DNA into large acid-insoluble oligonucleotides, which are then degraded further into small acid-soluble oligonucleotides. This chain is Exodeoxyribonuclease 7 small subunit, found in Agrobacterium fabrum (strain C58 / ATCC 33970) (Agrobacterium tumefaciens (strain C58)).